Here is a 166-residue protein sequence, read N- to C-terminus: Phosphopantetheine adenylyltransferase (166 aa).

Position 9 (serine 9) interacts with substrate. ATP is bound by residues serine 9–phenylalanine 10 and histidine 17. Substrate-binding residues include lysine 41, leucine 74, and lysine 88. ATP-binding positions include glycine 89–arginine 91, glutamate 99, and tyrosine 123–threonine 129.

Belongs to the bacterial CoaD family. As to quaternary structure, homohexamer. Mg(2+) is required as a cofactor.

The protein resides in the cytoplasm. It catalyses the reaction (R)-4'-phosphopantetheine + ATP + H(+) = 3'-dephospho-CoA + diphosphate. It participates in cofactor biosynthesis; coenzyme A biosynthesis; CoA from (R)-pantothenate: step 4/5. Reversibly transfers an adenylyl group from ATP to 4'-phosphopantetheine, yielding dephospho-CoA (dPCoA) and pyrophosphate. This chain is Phosphopantetheine adenylyltransferase, found in Paenarthrobacter aurescens (strain TC1).